The primary structure comprises 246 residues: 1-(5-phosphoribosyl)-5-[(5-phosphoribosylamino)methylideneamino] imidazole-4-carboxamide isomerase (246 aa).

Aspartate 8 (proton acceptor) is an active-site residue. The active-site Proton donor is the aspartate 129.

The protein belongs to the HisA/HisF family.

It localises to the cytoplasm. The catalysed reaction is 1-(5-phospho-beta-D-ribosyl)-5-[(5-phospho-beta-D-ribosylamino)methylideneamino]imidazole-4-carboxamide = 5-[(5-phospho-1-deoxy-D-ribulos-1-ylimino)methylamino]-1-(5-phospho-beta-D-ribosyl)imidazole-4-carboxamide. It functions in the pathway amino-acid biosynthesis; L-histidine biosynthesis; L-histidine from 5-phospho-alpha-D-ribose 1-diphosphate: step 4/9. This chain is 1-(5-phosphoribosyl)-5-[(5-phosphoribosylamino)methylideneamino] imidazole-4-carboxamide isomerase, found in Desulforamulus reducens (strain ATCC BAA-1160 / DSM 100696 / MI-1) (Desulfotomaculum reducens).